A 446-amino-acid polypeptide reads, in one-letter code: MPLNDTTMDRRGLVVERDFSFRILTACFLSLLILSTLLGNTLVCAAVIRFRHLRSKVTNFFVISLAVSDLLVAVLVMPWKAVAEIAGFWPFGSFCNIWVAFDIMCSTASILNLCVISVDRYWAISSPFRYERKMTPKAAFILISVAWTLSVLISFIPVQLNWHKARPLSSPDGNVSSQDETMDNCDSSLSRTYAISSSLISFYIPVAIMIVTYTRIYRIAQKQIRRISALERAAVHAKNCQNTTGNGANVECSQPESSFKMSFKRETKVLKTLSVIMGVFVCCWLPFFILNCMVPFCESDLPSGETKPFCIDSITFDVFVWFGWANSSLNPIIYAFNADFRKAFSTLLGCYRLCPTANNAIETVSINNNGAVFSSHHEPRGSISKDCNLVYLIPQAVTSRDPKKEEGGGSKPLEKTSPALSVILDYEVDLSLEKINPITQNGQHKT.

The Extracellular portion of the chain corresponds to 1 to 22 (MPLNDTTMDRRGLVVERDFSFR). N-linked (GlcNAc...) asparagine glycosylation is present at Asn4. A helical transmembrane segment spans residues 23–48 (ILTACFLSLLILSTLLGNTLVCAAVI). Topologically, residues 49–59 (RFRHLRSKVTN) are cytoplasmic. A helical membrane pass occupies residues 60–86 (FFVISLAVSDLLVAVLVMPWKAVAEIA). At 87–95 (GFWPFGSFC) the chain is on the extracellular side. Cys95 and Cys185 are oxidised to a cystine. Residues 96-118 (NIWVAFDIMCSTASILNLCVISV) form a helical membrane-spanning segment. Residues 119-137 (DRYWAISSPFRYERKMTPK) are Cytoplasmic-facing. A helical transmembrane segment spans residues 138 to 162 (AAFILISVAWTLSVLISFIPVQLNW). At 163-191 (HKARPLSSPDGNVSSQDETMDNCDSSLSR) the chain is on the extracellular side. The helical transmembrane segment at 192–217 (TYAISSSLISFYIPVAIMIVTYTRIY) threads the bilayer. The Cytoplasmic portion of the chain corresponds to 218–271 (RIAQKQIRRISALERAAVHAKNCQNTTGNGANVECSQPESSFKMSFKRETKVLK). The chain crosses the membrane as a helical span at residues 272–298 (TLSVIMGVFVCCWLPFFILNCMVPFCE). Residues 299-315 (SDLPSGETKPFCIDSIT) are Extracellular-facing. Residues 316 to 340 (FDVFVWFGWANSSLNPIIYAFNADF) form a helical membrane-spanning segment. The Cytoplasmic portion of the chain corresponds to 341-446 (RKAFSTLLGC…PITQNGQHKT (106 aa)). 2 S-palmitoyl cysteine lipidation sites follow: Cys350 and Cys354.

The protein belongs to the G-protein coupled receptor 1 family. In terms of assembly, interacts with DNAJC14 via its C-terminus.

Its subcellular location is the cell membrane. The protein localises to the endoplasmic reticulum membrane. It localises to the cell projection. It is found in the cilium membrane. The protein resides in the dendrite. Its subcellular location is the dendritic spine. This is one of the five types (D1 to D5) of receptors for dopamine. The activity of this receptor is mediated by G proteins which activate adenylyl cyclase. The polypeptide is D(1A) dopamine receptor (DRD1) (Didelphis virginiana (North American opossum)).